The chain runs to 275 residues: Testis-specific gene 13 protein (275 aa).

Positions 1–20 (MSQKRQTKFQNGKSKTSENS) are enriched in polar residues. Positions 1–28 (MSQKRQTKFQNGKSKTSENSSAKREKGM) are disordered.

In terms of tissue distribution, testis-specific.

The polypeptide is Testis-specific gene 13 protein (TSGA13) (Homo sapiens (Human)).